A 223-amino-acid chain; its full sequence is Kynurenine formamidase (223 aa).

Residue phenylalanine 34 participates in substrate binding. Residues histidine 64, histidine 68, and aspartate 70 each contribute to the Zn(2+) site. The active-site Proton donor/acceptor is histidine 74. Zn(2+) is bound by residues histidine 174 and glutamate 186.

Belongs to the Cyclase 1 superfamily. KynB family. As to quaternary structure, homodimer. Zn(2+) serves as cofactor.

The catalysed reaction is N-formyl-L-kynurenine + H2O = L-kynurenine + formate + H(+). It participates in amino-acid degradation; L-tryptophan degradation via kynurenine pathway; L-kynurenine from L-tryptophan: step 2/2. Functionally, catalyzes the hydrolysis of N-formyl-L-kynurenine to L-kynurenine, the second step in the kynurenine pathway of tryptophan degradation. The protein is Kynurenine formamidase of Polaromonas naphthalenivorans (strain CJ2).